The following is a 506-amino-acid chain: Plant intracellular Ras-group-related LRR protein 1 (506 aa).

Positions 24–48 (TAKSSSSSDVEPPPSKSDPSSSSNH) are disordered. Positions 143–193 (KSILKLNELHESYEKLLKEAEERLVRIYESAEKNAAAVAEEEAAEVEVNEE) form a coiled coil. LRR repeat units follow at residues 203 to 225 (ENPL…AFGK), 226 to 249 (IQGL…IAGL), 251 to 272 (NLLE…IGLL), 273 to 295 (SKLK…ICHC), 297 to 319 (SLVV…GFEL), 320 to 342 (VKLE…IGEM), 344 to 364 (SLRY…SFGL), 365 to 389 (LTNL…SFGD), 390 to 412 (LISL…AFGT), and 414 to 436 (VNLT…VVKQ). The GVYW motif lies at 437 to 449 (GVDAVKMYMGKRW).

It belongs to the SHOC2 family. In terms of tissue distribution, widely expressed.

Functionally, leucine-rich repeat protein that likely mediates protein interactions, possibly in the context of signal transduction. PIRL1 acts redundantly with PIRL9 in the differentiation of microspores into pollen. This Arabidopsis thaliana (Mouse-ear cress) protein is Plant intracellular Ras-group-related LRR protein 1 (PIRL1).